The chain runs to 309 residues: Taste receptor type 2 member 114 (309 aa).

At 1–7 the chain is on the extracellular side; it reads MLSTMEG. Residues 8-28 form a helical membrane-spanning segment; that stretch reads VLLSVSTSEAVLGIVGNTFIA. The Cytoplasmic segment spans residues 29–43; that stretch reads LVNCMDYNRNKKLSN. Residues 44–64 traverse the membrane as a helical segment; the sequence is IGFILTGLAISRICLVLILIT. Residues 65-87 are Extracellular-facing; that stretch reads EAYIKIFYPQLLSPVNIIELISY. The chain crosses the membrane as a helical span at residues 88–108; that stretch reads LWIIICQLNVWFATSLSIFYF. Residues 109 to 127 are Cytoplasmic-facing; that stretch reads LKIANFSHYIFVWLKRRID. A helical membrane pass occupies residues 128–148; the sequence is LVFFFLIGCLLISWLFSFPVV. The Extracellular portion of the chain corresponds to 149 to 182; the sequence is AKMVKDNKMLYINTSWQIHMKKSELIINYVFTNG. An N-linked (GlcNAc...) asparagine glycan is attached at N161. The helical transmembrane segment at 183–203 threads the bilayer; it reads GVFLFFMIMLIVCFLLIISLW. The Cytoplasmic portion of the chain corresponds to 204–233; it reads RHRRQMESNKLGFRDLNTEVHVRTIKVLLS. The chain crosses the membrane as a helical span at residues 234–254; the sequence is FIILFILHFMGITINVICLLI. At 255 to 259 the chain is on the extracellular side; sequence PESNL. The helical transmembrane segment at 260-280 threads the bilayer; that stretch reads LFMFGLTTAFIYPGCHSLILI. The Cytoplasmic segment spans residues 281–309; it reads LANSRLKQCSVMILQLLKCCENGKELRDT.

The protein belongs to the G-protein coupled receptor T2R family.

It localises to the membrane. Functionally, putative taste receptor which may play a role in the perception of bitterness. This chain is Taste receptor type 2 member 114, found in Mus musculus (Mouse).